A 65-amino-acid chain; its full sequence is DNA-directed RNA polymerase subunit Rpo10 (65 aa).

C7, C10, C44, and C45 together coordinate Zn(2+).

The protein belongs to the archaeal Rpo10/eukaryotic RPB10 RNA polymerase subunit family. As to quaternary structure, part of the RNA polymerase complex. Requires Zn(2+) as cofactor.

It localises to the cytoplasm. The catalysed reaction is RNA(n) + a ribonucleoside 5'-triphosphate = RNA(n+1) + diphosphate. Its function is as follows. DNA-dependent RNA polymerase (RNAP) catalyzes the transcription of DNA into RNA using the four ribonucleoside triphosphates as substrates. In Nanoarchaeum equitans (strain Kin4-M), this protein is DNA-directed RNA polymerase subunit Rpo10.